A 330-amino-acid chain; its full sequence is MAEAAIDPRCEEQEELHAEDSEGLTTQWREEDEEEAAREQRQRERERQLQDQDKDKEDDGGHSLEQPGQQTLISLKSSELDEDEGFGDWSQKPEPRQQFWGNEGTAEGTEPSQSERPEEKQTEESSHQAKVHLEESNLSYREPDPEDAVGGSGEAEEHLIRHQVRTPSPLALEDTVELSSPPLSPTTKLADRTESLNRSIKKSNSVKKSQPTLPISTIDERLQQYTQATESSGRTPKLSRQPSIELPSMAVASTKTLWETGEVQSQSASKTPSCQDIVAGDMSKKSLWEQKGGSKISSTIKSTPSGKRYKFVATGHGKYEKVLVDEGSAP.

2 stretches are compositionally biased toward basic and acidic residues: residues 1–20 (MAEA…HAED) and 37–62 (AREQ…DGGH). 2 disordered regions span residues 1 to 246 (MAEA…SIEL) and 281 to 302 (DMSK…TIKS). The segment covering 66–77 (QPGQQTLISLKS) has biased composition (polar residues). Residues serine 77 and serine 78 each carry the phosphoserine; by CK2 modification. The span at 113-135 (QSERPEEKQTEESSHQAKVHLEE) shows a compositional bias: basic and acidic residues. The residue at position 166 (threonine 166) is a Phosphothreonine. 4 positions are modified to phosphoserine: serine 168, serine 179, serine 180, and serine 184. Polar residues-rich tracts occupy residues 206-215 (VKKSQPTLPI) and 223-242 (QQYT…SRQP). Serine 243 carries the post-translational modification Phosphoserine; by MAPKAPK2. A compositionally biased stretch (low complexity) spans 291 to 302 (KGGSKISSTIKS). Lysine 318 is subject to N6-acetyllysine.

In terms of processing, phosphorylated by casein kinase II, protein kinase C and MAPKAPK2. Phosphorylation by PKC induces translocation from membrane to cytoplasm. Phosphorylation by MAPKAPK2 may regulate neutrophil chemotaxis. In terms of tissue distribution, isoform 1 is expressed in normal mouse B and T-lymphocytes and in transformed B-cells but not (or in smaller amounts) in nine T-lymphoma lines tested. Isoform 2 is expressed in non-lymphoid cell lines (myocytes, stromal cells, fibroblasts).

It is found in the cell membrane. Its function is as follows. May play a role in mediating neutrophil activation and chemotaxis. In Mus musculus (Mouse), this protein is Lymphocyte-specific protein 1 (Lsp1).